Here is a 308-residue protein sequence, read N- to C-terminus: tRNA dimethylallyltransferase (308 aa).

Residue 10–17 (GPTASGKT) participates in ATP binding. 12–17 (TASGKT) contacts substrate. Interaction with substrate tRNA stretches follow at residues 35–38 (DSSL) and 159–163 (QRIFR).

The protein belongs to the IPP transferase family. As to quaternary structure, monomer. The cofactor is Mg(2+).

The catalysed reaction is adenosine(37) in tRNA + dimethylallyl diphosphate = N(6)-dimethylallyladenosine(37) in tRNA + diphosphate. In terms of biological role, catalyzes the transfer of a dimethylallyl group onto the adenine at position 37 in tRNAs that read codons beginning with uridine, leading to the formation of N6-(dimethylallyl)adenosine (i(6)A). The sequence is that of tRNA dimethylallyltransferase from Francisella tularensis subsp. novicida (strain U112).